Consider the following 102-residue polypeptide: Small ribosomal subunit protein eS24 (102 aa).

The protein belongs to the eukaryotic ribosomal protein eS24 family.

The sequence is that of Small ribosomal subunit protein eS24 (rps24e) from Haloarcula marismortui (strain ATCC 43049 / DSM 3752 / JCM 8966 / VKM B-1809) (Halobacterium marismortui).